The sequence spans 3373 residues: Intermembrane lipid transfer protein vps13A (3373 aa).

One can recognise a Chorein N-terminal domain in the interval 3 to 119 (FEGLVSDVLS…QAELKKKKLE (117 aa)). 5 disordered regions span residues 818 to 858 (PKAT…VNSS), 1028 to 1096 (VPIN…KTAS), 1259 to 1304 (NNNK…DLEK), 1648 to 1729 (DPSI…EEEK), and 1872 to 1913 (QKKR…GKKD). The span at 823–839 (TPINDSNSPSSVSPKLI) shows a compositional bias: polar residues. Low complexity-rich tracts occupy residues 840–858 (STSP…VNSS) and 1048–1066 (SSPN…QSPQ). 2 stretches are compositionally biased toward basic and acidic residues: residues 1263-1274 (SIEKSKSIDSKL) and 1288-1304 (RSDD…DLEK). Low complexity-rich tracts occupy residues 1659 to 1685 (QQQQ…RSQS), 1695 to 1716 (SSIG…SLSS), and 1884 to 1898 (SSST…STNS). Positions 1899-1909 (FQTSTSGNSNS) are enriched in polar residues. The SHR-BD domain occupies 2405-2706 (TLSFYCQYWL…CYGWDEPSAE (302 aa)). The interval 2909–2933 (RGNNASNNNNNNGMTSSQMRQSGSG) is disordered. Residues 2911–2920 (NNASNNNNNN) are compositionally biased toward low complexity.

This sequence belongs to the VPS13 family.

The protein resides in the membrane. Its function is as follows. Mediates the transfer of lipids between membranes at organelle contact sites. The chain is Intermembrane lipid transfer protein vps13A (vps13A) from Dictyostelium discoideum (Social amoeba).